A 145-amino-acid polypeptide reads, in one-letter code: Probable disulfide formation protein (145 aa).

The chain crosses the membrane as a helical span at residues Glu-9–Phe-28. Cys-38 and Cys-41 are oxidised to a cystine. Helical transmembrane passes span Tyr-43 to Lys-62 and Pro-69 to Leu-86. Cys-100 and Cys-106 are disulfide-bonded. A helical membrane pass occupies residues Gly-115–Ile-137.

This sequence belongs to the DsbB family. BdbC subfamily.

The protein resides in the cell membrane. Functionally, required for disulfide bond formation in some proteins. The sequence is that of Probable disulfide formation protein from Oceanobacillus iheyensis (strain DSM 14371 / CIP 107618 / JCM 11309 / KCTC 3954 / HTE831).